Reading from the N-terminus, the 58-residue chain is Ribosome modulation factor (58 aa).

Residues 1–28 form a disordered region; sequence MKRQKRDRFERAHTQGFKAGLHGRSKDN.

This sequence belongs to the ribosome modulation factor family.

It is found in the cytoplasm. Its function is as follows. During stationary phase, converts 70S ribosomes to an inactive dimeric form (100S ribosomes). This chain is Ribosome modulation factor, found in Idiomarina loihiensis (strain ATCC BAA-735 / DSM 15497 / L2-TR).